The chain runs to 247 residues: ABC-type transporter ATP-binding protein EcsA (247 aa).

One can recognise an ABC transporter domain in the interval 4 to 234 (LSVKDLTGGY…FGMKDAALDD (231 aa)). Position 36–43 (36–43 (GLNGAGKS)) interacts with ATP.

The protein belongs to the ABC transporter superfamily.

Has a role in exoprotein production, sporulation and competence. The chain is ABC-type transporter ATP-binding protein EcsA (ecsA) from Bacillus subtilis (strain 168).